Consider the following 136-residue polypeptide: Histone H3, embryonic (136 aa).

Residues 1 to 43 (MARTKQTARKSTGGKAPRKQLATKAARKSAPATGGVKKPHRYR) form a disordered region. An N6-methylated lysine modification is found at lysine 5. Lysine 10 carries the post-translational modification N6-acetyllysine; alternate. Residue lysine 10 is modified to N6-methylated lysine; alternate. A Phosphoserine modification is found at serine 11. N6-acetyllysine occurs at positions 15 and 24. N6-methylated lysine occurs at positions 28, 37, and 80.

The protein belongs to the histone H3 family. The nucleosome is a histone octamer containing two molecules each of H2A, H2B, H3 and H4 assembled in one H3-H4 heterotetramer and two H2A-H2B heterodimers. The octamer wraps approximately 147 bp of DNA. Post-translationally, acetylation is generally linked to gene activation. Methylation at Lys-5 is linked to gene activation. Methylation at Lys-10 is linked to gene repression.

It is found in the nucleus. Its subcellular location is the chromosome. Core component of nucleosome. Nucleosomes wrap and compact DNA into chromatin, limiting DNA accessibility to the cellular machineries which require DNA as a template. Histones thereby play a central role in transcription regulation, DNA repair, DNA replication and chromosomal stability. DNA accessibility is regulated via a complex set of post-translational modifications of histones, also called histone code, and nucleosome remodeling. In Paracentrotus lividus (Common sea urchin), this protein is Histone H3, embryonic.